The chain runs to 293 residues: Acidic endochitinase (293 aa).

Residues 1–22 (MEKCFNIIPSLLLISLLIKSSN) form the signal peptide. The GH18 domain occupies 24–293 (AGIAVYWGQN…GYSNAIKGSV (270 aa)). 2 disulfides stabilise this stretch: C43–C90 and C73–C80. Residue E150 is the Proton donor of the active site. C179 and C208 are joined by a disulfide.

Belongs to the glycosyl hydrolase 18 family. Chitinase class II subfamily.

The protein resides in the secreted. The protein localises to the extracellular space. The enzyme catalyses Random endo-hydrolysis of N-acetyl-beta-D-glucosaminide (1-&gt;4)-beta-linkages in chitin and chitodextrins.. Its function is as follows. This protein functions as a defense against chitin containing fungal pathogens. The chain is Acidic endochitinase from Cicer arietinum (Chickpea).